The chain runs to 234 residues: Large ribosomal subunit protein uL1c (234 aa).

The protein belongs to the universal ribosomal protein uL1 family. As to quaternary structure, part of the 50S ribosomal subunit.

The protein localises to the plastid. It localises to the chloroplast. Its function is as follows. Binds directly to 23S rRNA. Might be involved in E site tRNA release (Potential). This chain is Large ribosomal subunit protein uL1c (rpl1), found in Guillardia theta (Cryptophyte).